The chain runs to 112 residues: Putative pterin-4-alpha-carbinolamine dehydratase (112 aa).

Belongs to the pterin-4-alpha-carbinolamine dehydratase family.

It catalyses the reaction (4aS,6R)-4a-hydroxy-L-erythro-5,6,7,8-tetrahydrobiopterin = (6R)-L-erythro-6,7-dihydrobiopterin + H2O. The chain is Putative pterin-4-alpha-carbinolamine dehydratase from Shewanella sp. (strain ANA-3).